We begin with the raw amino-acid sequence, 637 residues long: 1-deoxy-D-xylulose-5-phosphate synthase (637 aa).

Thiamine diphosphate is bound by residues histidine 71 and serine 112–alanine 114. Aspartate 144 is a Mg(2+) binding site. Thiamine diphosphate contacts are provided by residues glycine 145–alanine 146, asparagine 173, tyrosine 284, and glutamate 365. Residue asparagine 173 participates in Mg(2+) binding.

The protein belongs to the transketolase family. DXPS subfamily. As to quaternary structure, homodimer. It depends on Mg(2+) as a cofactor. Requires thiamine diphosphate as cofactor.

The catalysed reaction is D-glyceraldehyde 3-phosphate + pyruvate + H(+) = 1-deoxy-D-xylulose 5-phosphate + CO2. It participates in metabolic intermediate biosynthesis; 1-deoxy-D-xylulose 5-phosphate biosynthesis; 1-deoxy-D-xylulose 5-phosphate from D-glyceraldehyde 3-phosphate and pyruvate: step 1/1. Its function is as follows. Catalyzes the acyloin condensation reaction between C atoms 2 and 3 of pyruvate and glyceraldehyde 3-phosphate to yield 1-deoxy-D-xylulose-5-phosphate (DXP). The protein is 1-deoxy-D-xylulose-5-phosphate synthase of Mycolicibacterium vanbaalenii (strain DSM 7251 / JCM 13017 / BCRC 16820 / KCTC 9966 / NRRL B-24157 / PYR-1) (Mycobacterium vanbaalenii).